Consider the following 144-residue polypeptide: Large ribosomal subunit protein uL16 (144 aa).

The protein belongs to the universal ribosomal protein uL16 family. Part of the 50S ribosomal subunit.

Its function is as follows. Binds 23S rRNA and is also seen to make contacts with the A and possibly P site tRNAs. This chain is Large ribosomal subunit protein uL16, found in Halothermothrix orenii (strain H 168 / OCM 544 / DSM 9562).